An 86-amino-acid polypeptide reads, in one-letter code: Large ribosomal subunit protein bL27 (86 aa).

The tract at residues 1-26 (MASKKAGGSTKNGRDSQSKRLGVKRF) is disordered.

Belongs to the bacterial ribosomal protein bL27 family.

The protein is Large ribosomal subunit protein bL27 of Bdellovibrio bacteriovorus (strain ATCC 15356 / DSM 50701 / NCIMB 9529 / HD100).